A 231-amino-acid polypeptide reads, in one-letter code: Platelet-activating factor acetylhydrolase IB subunit alpha1 (231 aa).

Position 2 is an N-acetylserine (serine 2). Residue serine 2 is modified to Phosphoserine. Active-site residues include serine 47, aspartate 192, and histidine 195.

This sequence belongs to the 'GDSL' lipolytic enzyme family. Platelet-activating factor acetylhydrolase IB beta/gamma subunits subfamily. In terms of assembly, forms a catalytic dimer which is either homodimer (alpha1/alpha1 homodimer) or heterodimer with PAFAH1B2 (alpha1/alpha2 heterodimer). Component of the cytosolic (PAF-AH (I)) heterotetrameric enzyme, which is composed of PAFAH1B1 (beta), PAFAH1B2 (alpha2) and PAFAH1B3 (alpha1) subunits. The catalytic activity of the enzyme resides in the alpha1 (PAFAH1B3) and alpha2 (PAFAH1B2) subunits, whereas the beta subunit (PAFAH1B1) has regulatory activity. Trimer formation is not essential for the catalytic activity. Interacts with VLDLR; this interaction may modulate the Reelin pathway. In the adult, expressed in brain, skeletal muscle, kidney, thymus, spleen, colon, testis, ovary and peripheral blood leukocytes. In the fetus, highest expression occurs in brain.

It localises to the cytoplasm. It carries out the reaction a 1-O-alkyl-2-acetyl-sn-glycero-3-phosphocholine + H2O = a 1-O-alkyl-sn-glycero-3-phosphocholine + acetate + H(+). The enzyme catalyses 1-O-hexadecyl-2-acetyl-sn-glycero-3-phosphocholine + H2O = 1-O-hexadecyl-sn-glycero-3-phosphocholine + acetate + H(+). The catalysed reaction is 1-O-hexadecyl-2-acetyl-sn-glycero-3-phosphate + H2O = 1-O-hexadecyl-sn-glycero-3-phosphate + acetate + H(+). With respect to regulation, beta subunit (PAFAH1B1) inhibits the acetylhydrolase activity of the alpha1/alpha1 catalytic homodimer. Its function is as follows. Alpha1 catalytic subunit of the cytosolic type I platelet-activating factor (PAF) acetylhydrolase (PAF-AH (I)) heterotetrameric enzyme that catalyzes the hydrolyze of the acetyl group at the sn-2 position of PAF and its analogs and modulates the action of PAF. The activity and substrate specificity of PAF-AH (I) are affected by its subunit composition. Both alpha1/alpha1 homodimer (PAFAH1B3/PAFAH1B3 homodimer) and alpha1/alpha2 heterodimer(PAFAH1B3/PAFAH1B2 heterodimer) hydrolyze 1-O-alkyl-2-acetyl-sn-glycero-3-phosphoric acid (AAGPA) more efficiently than PAF, but they have little hydrolytic activity towards 1-O-alkyl-2-acetyl-sn-glycero-3-phosphorylethanolamine (AAGPE). Plays an important role during the development of brain. The chain is Platelet-activating factor acetylhydrolase IB subunit alpha1 from Homo sapiens (Human).